The sequence spans 364 residues: Caffeic acid 3-O-methyltransferase 2 (364 aa).

129–135 is a substrate binding site; sequence MNQDKVL. Residues 161–179 form a substrate binding region; the sequence is AFEYHGTDPRFNKVFNKGM. S-adenosyl-L-methionine is bound by residues Gly-207, Asp-230, Asp-250, Met-251, and Lys-264. Residue His-268 is the Proton acceptor of the active site.

The protein belongs to the class I-like SAM-binding methyltransferase superfamily. Cation-independent O-methyltransferase family. COMT subfamily. Homodimer.

The catalysed reaction is (E)-caffeate + S-adenosyl-L-methionine = (E)-ferulate + S-adenosyl-L-homocysteine + H(+). It participates in aromatic compound metabolism; phenylpropanoid biosynthesis. Catalyzes the conversion of caffeic acid to ferulic acid and of 5-hydroxyferulic acid to sinapic acid. The resulting products may subsequently be converted to the corresponding alcohols that are incorporated into lignins. In Populus tremuloides (Quaking aspen), this protein is Caffeic acid 3-O-methyltransferase 2 (OMT2).